A 578-amino-acid polypeptide reads, in one-letter code: Zinc finger-containing ubiquitin peptidase 1 (578 aa).

The C2H2-type 1 zinc-finger motif lies at 2 to 24 (LSCNICGETVTSEPDMKAHLIVH). The C2H2-type 2; atypical zinc finger occupies 29-52 (IICPFCKLSGVNYDEMCFHIETAH). C2H2-type zinc fingers lie at residues 154–177 (PECPFCGKIEEHSEDMETHVKTKH) and 193–215 (YDCPMCGLICTNYHILQEHVDLH). An MIU region spans residues 226–248 (DRVQCSGDLQLAHQLQQEEDRKR). The tract at residues 249–274 (RSEESRQEIEEFQKLQRQYGLDNSGG) is zUBD/ZHA. An N6-acetyllysine modification is found at K262. The active-site Nucleophile is the C360. The active-site Proton acceptor is the H491. The active site involves D512.

Belongs to the peptidase C78 family. ZUFSP subfamily. Interacts with RPA1 and RPA2.

The protein resides in the cytoplasm. The protein localises to the nucleus. It catalyses the reaction Thiol-dependent hydrolysis of ester, thioester, amide, peptide and isopeptide bonds formed by the C-terminal Gly of ubiquitin (a 76-residue protein attached to proteins as an intracellular targeting signal).. Functionally, deubiquitinase with endodeubiquitinase activity that specifically interacts with and cleaves 'Lys-63'-linked long polyubiquitin chains. Shows only weak activity against 'Lys-11' and 'Lys-48'-linked chains. Plays an important role in genome stability pathways, functioning to prevent spontaneous DNA damage and also promote cellular survival in response to exogenous DNA damage. Modulates the ubiquitination status of replication protein A (RPA) complex proteins in response to replication stress. This Homo sapiens (Human) protein is Zinc finger-containing ubiquitin peptidase 1.